The primary structure comprises 244 residues: Small ribosomal subunit protein uS3 (244 aa).

The KH type-2 domain maps to 39-107; sequence VREMLRKKLA…PAHINVTEVR (69 aa). The interval 213-244 is disordered; it reads VGQEKQDDSPRNDRNDRGDRGDRPSRPAREAR. Basic and acidic residues predominate over residues 216-244; sequence EKQDDSPRNDRNDRGDRGDRPSRPAREAR.

This sequence belongs to the universal ribosomal protein uS3 family. Part of the 30S ribosomal subunit. Forms a tight complex with proteins S10 and S14.

In terms of biological role, binds the lower part of the 30S subunit head. Binds mRNA in the 70S ribosome, positioning it for translation. In Xanthomonas axonopodis pv. citri (strain 306), this protein is Small ribosomal subunit protein uS3.